Here is a 355-residue protein sequence, read N- to C-terminus: Guanine nucleotide-binding protein G(i) subunit alpha-2 (355 aa).

Glycine 2 is lipidated: N-myristoyl glycine. Cysteine 3 carries S-palmitoyl cysteine lipidation. A G-alpha domain is found at 32 to 355; it reads REVKLLLLGA…KNNLKDCGLF (324 aa). Residues 35 to 48 form a G1 motif region; it reads KLLLLGAGESGKST. Residues 40 to 47, 176 to 182, 201 to 205, 270 to 273, and alanine 327 each bind GTP; these read GAGESGKS, LRTRVKT, DVGGQ, and NKKD. Residues serine 47 and threonine 182 each contribute to the Mg(2+) site. The interval 174–182 is G2 motif; that stretch reads DVLRTRVKT. A G3 motif region spans residues 197–206; sequence FKMFDVGGQR. Residues 266–273 form a G4 motif region; the sequence is ILFLNKKD. The tract at residues 325–330 is G5 motif; the sequence is TCATDT.

This sequence belongs to the G-alpha family. G(i/o/t/z) subfamily. G proteins are composed of 3 units; alpha, beta and gamma. The alpha chain contains the guanine nucleotide binding site. In this context, interacts with GNB2. Interacts with UNC5B. Interacts with GPSM1. Interacts with RGS12 and RGS14. Interacts (inactive GDP-bound form) with NUCB1 (via GBA motif); the interaction leads to activation of GNAI3. Interacts (inactive GDP-bound form) with CCDC88C/DAPLE (via GBA motif). Interacts (inactive GDP-bound form) with CCDC8A/GIV (via GBA motif).

It is found in the cytoplasm. Its subcellular location is the cell membrane. It localises to the cytoskeleton. The protein resides in the microtubule organizing center. The protein localises to the centrosome. It is found in the membrane. In terms of biological role, guanine nucleotide-binding proteins (G proteins) are involved as modulators or transducers in various transmembrane signaling systems. The G(i) proteins are involved in hormonal regulation of adenylate cyclase: they inhibit the cyclase in response to beta-adrenergic stimuli. May play a role in cell division. The chain is Guanine nucleotide-binding protein G(i) subunit alpha-2 (Gnai2) from Rattus norvegicus (Rat).